Reading from the N-terminus, the 461-residue chain is Ufm1-specific protease 2 (461 aa).

Residues cysteine 294, aspartate 418, and histidine 420 contribute to the active site.

The protein belongs to the peptidase C78 family.

It is found in the endoplasmic reticulum. The protein resides in the cytoplasm. It localises to the nucleus. Its function is as follows. Thiol-dependent isopeptidase that specifically cleaves UFM1, a ubiquitin-like modifier protein, from conjugated proteins, such as CD274/PD-L1, CYB5R3, DDRGK1, MRE11, RPL26/uL24, TRIP4 and RPL26/uL24. While it is also able to mediate the processing of UFM1 precursors, a prerequisite for conjugation reactions, UFSP2 mainly acts as a protein deUFMylase that mediates deconjugation of UFM1 from target proteins. Mediates deUFMylation of RPL26/uL24, a critical step to release the UFM1 ribosome E3 ligase (UREL) complex during the recycling of 60S ribosome subunits from the endoplasmic reticulum. Catalyzes deUFMylation of TRIP4, regulating intracellular nuclear receptors transactivation and thereby regulate cell proliferation and differentiation. In Rattus norvegicus (Rat), this protein is Ufm1-specific protease 2.